Here is a 288-residue protein sequence, read N- to C-terminus: Sulfhydrogenase 2 subunit gamma (288 aa).

Residues Tyr-4–Met-103 form the FAD-binding FR-type domain. [2Fe-2S] cluster contacts are provided by Cys-250, Cys-255, Cys-258, and Cys-270.

Dimer of heterotetramer of alpha, beta, gamma and delta subunits. The nickel-containing alpha and delta subunits constitute the hydrogenase activity. The beta and gamma subunits (flavin-containing dimer) constitute the sulfur reductase activity. Requires FAD as cofactor. The cofactor is [2Fe-2S] cluster.

Its subcellular location is the cytoplasm. The enzyme catalyses n sulfur + H2 = (n-1) sulfur + hydrogen sulfide + H(+). Its function is as follows. Part of a bifunctional enzyme complex that functions as a hydrogen-evolving hydrogenase with sulfur-reducing activity. May play a role in hydrogen cycling during fermentative growth. Activity exhibited with NAD in addition to NADPH. The beta and gamma subunits form the sulfur-reducing component that catalyzes the cytoplasmic production of hydrogen sulfide in the presence of elemental sulfur. The protein is Sulfhydrogenase 2 subunit gamma of Pyrococcus furiosus (strain ATCC 43587 / DSM 3638 / JCM 8422 / Vc1).